The sequence spans 358 residues: Type II methyltransferase M.HpaII (358 aa).

The region spanning 32–356 (FTFIDLFAGI…KKILEKLGNL (325 aa)) is the SAM-dependent MTase C5-type domain. Cysteine 103 is an active-site residue.

This sequence belongs to the class I-like SAM-binding methyltransferase superfamily. C5-methyltransferase family. As to quaternary structure, monomer.

The catalysed reaction is a 2'-deoxycytidine in DNA + S-adenosyl-L-methionine = a 5-methyl-2'-deoxycytidine in DNA + S-adenosyl-L-homocysteine + H(+). A methylase that recognizes the double-stranded sequence 5'-CCGG-3', methylates C-2 on both strands, and protects the DNA from cleavage by the HpaII endonuclease. The protein is Type II methyltransferase M.HpaII of Haemophilus parainfluenzae.